A 187-amino-acid polypeptide reads, in one-letter code: Large ribosomal subunit protein uL22 (187 aa).

The span at 159-171 (VSKPTDDAAPKVK) shows a compositional bias: basic and acidic residues. Residues 159–187 (VSKPTDDAAPKVKKESKRKQRRQLARGEF) are disordered. Positions 172 to 187 (KESKRKQRRQLARGEF) are enriched in basic residues.

It belongs to the universal ribosomal protein uL22 family.

This chain is Large ribosomal subunit protein uL22 (rpl-17), found in Caenorhabditis elegans.